Reading from the N-terminus, the 1009-residue chain is DNA polymerase catalytic subunit (1009 aa).

Belongs to the DNA polymerase type-B family.

Its subcellular location is the host nucleus. It carries out the reaction DNA(n) + a 2'-deoxyribonucleoside 5'-triphosphate = DNA(n+1) + diphosphate. The polypeptide is DNA polymerase catalytic subunit (9) (Saimiri sciureus (Common squirrel monkey)).